Consider the following 333-residue polypeptide: 4-hydroxy-2-oxovalerate aldolase (333 aa).

In terms of domain architecture, Pyruvate carboxyltransferase spans 3–253; sequence ILINDSTLRD…NTGIDLYHFL (251 aa). Position 11 to 12 (11 to 12) interacts with substrate; the sequence is RD. Position 12 (Asp-12) interacts with Mn(2+). His-15 acts as the Proton acceptor in catalysis. Positions 165 and 192 each coordinate substrate. Mn(2+)-binding residues include His-192 and His-194.

It belongs to the 4-hydroxy-2-oxovalerate aldolase family. In terms of assembly, interacts with MhpF.

The enzyme catalyses (S)-4-hydroxy-2-oxopentanoate = acetaldehyde + pyruvate. The protein operates within aromatic compound metabolism; 3-phenylpropanoate degradation. Catalyzes the retro-aldol cleavage of 4-hydroxy-2-oxopentanoate to pyruvate and acetaldehyde. Is involved in the meta-cleavage pathway for the degradation of aromatic compounds. The polypeptide is 4-hydroxy-2-oxovalerate aldolase (Serratia proteamaculans (strain 568)).